The following is a 166-amino-acid chain: ATP synthase subunit b (166 aa).

Residues 8 to 28 traverse the membrane as a helical segment; that stretch reads FSFGLFFWQALILVILILLLV.

This sequence belongs to the ATPase B chain family. F-type ATPases have 2 components, F(1) - the catalytic core - and F(0) - the membrane proton channel. F(1) has five subunits: alpha(3), beta(3), gamma(1), delta(1), epsilon(1). F(0) has three main subunits: a(1), b(2) and c(10-14). The alpha and beta chains form an alternating ring which encloses part of the gamma chain. F(1) is attached to F(0) by a central stalk formed by the gamma and epsilon chains, while a peripheral stalk is formed by the delta and b chains.

It is found in the cell inner membrane. F(1)F(0) ATP synthase produces ATP from ADP in the presence of a proton or sodium gradient. F-type ATPases consist of two structural domains, F(1) containing the extramembraneous catalytic core and F(0) containing the membrane proton channel, linked together by a central stalk and a peripheral stalk. During catalysis, ATP synthesis in the catalytic domain of F(1) is coupled via a rotary mechanism of the central stalk subunits to proton translocation. Its function is as follows. Component of the F(0) channel, it forms part of the peripheral stalk, linking F(1) to F(0). This chain is ATP synthase subunit b, found in Flavobacterium johnsoniae (strain ATCC 17061 / DSM 2064 / JCM 8514 / BCRC 14874 / CCUG 350202 / NBRC 14942 / NCIMB 11054 / UW101) (Cytophaga johnsonae).